Reading from the N-terminus, the 367-residue chain is Mitochondrial distribution and morphology protein 34 (367 aa).

The 197-residue stretch at 1–197 folds into the SMP-LTD domain; the sequence is MSFNFTWPEF…LPSIIHRLSQ (197 aa). Disordered stretches follow at residues 267–311 and 347–367; these read QGLK…ALSS and PAHR…FHLS. Polar residues predominate over residues 286–302; sequence FHTTSRVRVPSSLESNA.

This sequence belongs to the MDM34 family. In terms of assembly, component of the ER-mitochondria encounter structure (ERMES) or MDM complex, composed of MMM1, MDM10, MDM12 and MDM34.

Its subcellular location is the mitochondrion outer membrane. Functionally, component of the ERMES/MDM complex, which serves as a molecular tether to connect the endoplasmic reticulum (ER) and mitochondria. Components of this complex are involved in the control of mitochondrial shape and protein biogenesis, and function in nonvesicular lipid trafficking between the ER and mitochondria. MDM34 is required for the interaction of the ER-resident membrane protein MMM1 and the outer mitochondrial membrane-resident beta-barrel protein MDM10. The protein is Mitochondrial distribution and morphology protein 34 of Malassezia globosa (strain ATCC MYA-4612 / CBS 7966) (Dandruff-associated fungus).